The following is a 350-amino-acid chain: Protein RecA (350 aa).

An ATP-binding site is contributed by 66–73; sequence GPESSGKT.

This sequence belongs to the RecA family.

Its subcellular location is the cytoplasm. In terms of biological role, can catalyze the hydrolysis of ATP in the presence of single-stranded DNA, the ATP-dependent uptake of single-stranded DNA by duplex DNA, and the ATP-dependent hybridization of homologous single-stranded DNAs. It interacts with LexA causing its activation and leading to its autocatalytic cleavage. The chain is Protein RecA from Dichelobacter nodosus (strain VCS1703A).